The chain runs to 475 residues: Alpha,alpha-trehalose-phosphate synthase [UDP-forming] (475 aa).

D-glucose 6-phosphate is bound by residues Tyr93 and Asp147. Residues Arg285 and Lys290 each coordinate UDP. The UDP-alpha-D-glucose site is built by Arg285 and Lys290. Arg323 lines the D-glucose 6-phosphate pocket. Residue 384–392 (DGMNLVSYE) participates in UDP-alpha-D-glucose binding. Residue 388-392 (LVSYE) coordinates UDP.

Belongs to the glycosyltransferase 20 family.

It catalyses the reaction D-glucose 6-phosphate + UDP-alpha-D-glucose = alpha,alpha-trehalose 6-phosphate + UDP + H(+). It participates in carbohydrate biosynthesis. In terms of biological role, synthase catalytic subunit of the trehalose synthase complex that catalyzes the production of trehalose from glucose-6-phosphate and UDP-alpha-D-glucose in a two step process. In Pichia angusta (Yeast), this protein is Alpha,alpha-trehalose-phosphate synthase [UDP-forming].